The sequence spans 67 residues: Light-harvesting protein B-870 alpha chain (67 aa).

The Cytoplasmic segment spans residues methionine 1–arginine 12. The chain crosses the membrane as a helical span at residues alanine 13–leucine 33. Histidine 29 contributes to the a bacteriochlorophyll binding site. At glycine 34–lysine 67 the chain is on the periplasmic side.

It belongs to the antenna complex alpha subunit family. As to quaternary structure, an alpha/beta heterodimer. The core complex is formed by different alpha and beta chains, binding bacteriochlorophyll molecules, and arranged most probably in tetrameric structures disposed around the reaction center. The non-pigmented gamma chains may constitute additional components.

It localises to the cell inner membrane. Functionally, antenna complexes are light-harvesting systems, which transfer the excitation energy to the reaction centers. This chain is Light-harvesting protein B-870 alpha chain (pufA), found in Rubrivivax gelatinosus (strain NBRC 100245 / IL144).